The sequence spans 144 residues: 3-hydroxyacyl-[acyl-carrier-protein] dehydratase FabZ (144 aa).

Histidine 48 is a catalytic residue.

This sequence belongs to the thioester dehydratase family. FabZ subfamily.

It localises to the cytoplasm. The enzyme catalyses a (3R)-hydroxyacyl-[ACP] = a (2E)-enoyl-[ACP] + H2O. In terms of biological role, involved in unsaturated fatty acids biosynthesis. Catalyzes the dehydration of short chain beta-hydroxyacyl-ACPs and long chain saturated and unsaturated beta-hydroxyacyl-ACPs. This chain is 3-hydroxyacyl-[acyl-carrier-protein] dehydratase FabZ, found in Listeria monocytogenes serotype 4b (strain CLIP80459).